A 503-amino-acid polypeptide reads, in one-letter code: Probable cytosol aminopeptidase (503 aa).

Lysine 270 and aspartate 275 together coordinate Mn(2+). The active site involves lysine 282. Residues aspartate 293, aspartate 352, and glutamate 354 each contribute to the Mn(2+) site. The active site involves arginine 356.

The protein belongs to the peptidase M17 family. Mn(2+) serves as cofactor.

The protein localises to the cytoplasm. The enzyme catalyses Release of an N-terminal amino acid, Xaa-|-Yaa-, in which Xaa is preferably Leu, but may be other amino acids including Pro although not Arg or Lys, and Yaa may be Pro. Amino acid amides and methyl esters are also readily hydrolyzed, but rates on arylamides are exceedingly low.. It catalyses the reaction Release of an N-terminal amino acid, preferentially leucine, but not glutamic or aspartic acids.. Presumably involved in the processing and regular turnover of intracellular proteins. Catalyzes the removal of unsubstituted N-terminal amino acids from various peptides. The sequence is that of Probable cytosol aminopeptidase from Shigella dysenteriae serotype 1 (strain Sd197).